A 723-amino-acid chain; its full sequence is Catalase-peroxidase (723 aa).

The tryptophyl-tyrosyl-methioninium (Trp-Tyr) (with M-238) cross-link spans 89-212 (WHSAGTYRTG…LAAVQMGLIY (124 aa)). H90 (proton acceptor) is an active-site residue. Residues 212–238 (YVNPEGPNGDPDPFAAAVDIRETFARM) constitute a cross-link (tryptophyl-tyrosyl-methioninium (Tyr-Met) (with W-89)). Residue H253 coordinates heme b.

Belongs to the peroxidase family. Peroxidase/catalase subfamily. As to quaternary structure, homodimer or homotetramer. The cofactor is heme b. Formation of the three residue Trp-Tyr-Met cross-link is important for the catalase, but not the peroxidase activity of the enzyme.

The enzyme catalyses H2O2 + AH2 = A + 2 H2O. It catalyses the reaction 2 H2O2 = O2 + 2 H2O. Bifunctional enzyme with both catalase and broad-spectrum peroxidase activity. The polypeptide is Catalase-peroxidase (Shewanella baltica (strain OS185)).